The following is a 783-amino-acid chain: Type 4 coupling protein DotL (783 aa).

A helical membrane pass occupies residues 47–67 (VSYYFSEAATFLLIMGGIFFL). The segment at 100–500 (NIARGITFFG…ICMKLEDPTE (401 aa)) is ATPase domain. Residues 671–773 (VEGALTIFSK…SAKISAEREK (103 aa)) form an interaction with IcmS/IcmW region.

The T4BSS is a complex nanomachine composed of several subcomplexes. This subunit is part of the Type IV Coupling Complex (T4CC), a subcomplex composed of the DotLMNYZ core and the IcmSW-LvgA adapter subunits, linked by the C-terminal tail of DotL. Six DotLMNYZ hetero-pentameric units may assemble into a hexameric nanomachine, forming an inner membrane channel for effectors to pass through. Interacts directly with DotM. Interacts directly, via its C-terminal region, with the type IV adapter proteins IcmS and IcmW. Also interacts with DotN and LvgA via its C-terminal region.

It localises to the cell inner membrane. In terms of biological role, component of the Dot/Icm type IVB secretion system (T4BSS), which is used to inject bacterial effector proteins into eukaryotic host cells. Part of a subcomplex which recruits effector proteins and delivers them to the core transmembrane subcomplex. Plays a central role in the assembly of the subcomplex. Required for the recruitment of IcmS and IcmW to the inner membrane and for the translocation of adapter-dependent substrates. May have ATPase activity. The sequence is that of Type 4 coupling protein DotL from Legionella pneumophila subsp. pneumophila (strain Philadelphia 1 / ATCC 33152 / DSM 7513).